Consider the following 395-residue polypeptide: uncharacterized protein (395 aa).

Residues 286-306 show a composition bias toward low complexity; that stretch reads SSNKSSESTMTSPLDSASSLH. The segment at 286–395 is disordered; sequence SSNKSSESTM…RNDDSGLESV (110 aa). Pro residues predominate over residues 350–362; the sequence is RPPPPSVHPPIFP. Over residues 364-385 the composition is skewed to polar residues; that stretch reads QTQLFHPPTYSTQRHVTSPNSS.

This is an uncharacterized protein from Caenorhabditis elegans.